We begin with the raw amino-acid sequence, 530 residues long: Autoinducer-2 kinase (530 aa).

This sequence belongs to the FGGY kinase family.

The protein localises to the cytoplasm. The enzyme catalyses (S)-4,5-dihydroxypentane-2,3-dione + ATP = (2S)-2-hydroxy-3,4-dioxopentyl phosphate + ADP + H(+). Catalyzes the phosphorylation of autoinducer-2 (AI-2) to phospho-AI-2, which subsequently inactivates the transcriptional regulator LsrR and leads to the transcription of the lsr operon. Phosphorylates the ring-open form of (S)-4,5-dihydroxypentane-2,3-dione (DPD), which is the precursor to all AI-2 signaling molecules, at the C5 position. This is Autoinducer-2 kinase from Escherichia coli (strain K12 / DH10B).